We begin with the raw amino-acid sequence, 141 residues long: Hemoglobin subunit alpha (141 aa).

Residues 1 to 141 (VLSSDDKCNV…VSSVLTSKYR (141 aa)) enclose the Globin domain. His-58 is a binding site for O2. His-87 serves as a coordination point for heme b.

It belongs to the globin family. Heterotetramer of two alpha chains and two beta chains. Red blood cells.

In terms of biological role, involved in oxygen transport from the lung to the various peripheral tissues. Has antimicrobial activity against B.subtilis ATCC 6633. Has antioxidant activity. The sequence is that of Hemoglobin subunit alpha from Crocodylus siamensis (Siamese crocodile).